The sequence spans 302 residues: Mitochondrial glycine transporter (302 aa).

3 Solcar repeats span residues His-22–His-112, Pro-119–Leu-203, and Phe-213–Lys-297. The next 6 membrane-spanning stretches (helical) occupy residues Phe-28–Gln-53, Gly-87–Phe-113, Val-125–Glu-150, Gly-178–Lys-201, Leu-217–Met-243, and Gly-272–Val-290.

Belongs to the mitochondrial carrier (TC 2.A.29) family. SLC25A38 subfamily.

It is found in the mitochondrion inner membrane. It catalyses the reaction glycine(in) = glycine(out). In terms of biological role, mitochondrial glycine transporter that imports glycine into the mitochondrial matrix. Plays an important role in providing glycine for the first enzymatic step in heme biosynthesis, the condensation of glycine with succinyl-CoA to produce 5-aminolevulinate (ALA) in the mitochondrial matrix. Required during erythropoiesis. Its function is as follows. May play a role as pro-apoptotic protein that induces caspase-dependent apoptosis. This Xenopus laevis (African clawed frog) protein is Mitochondrial glycine transporter.